A 150-amino-acid polypeptide reads, in one-letter code: Transcriptional regulator MraZ (150 aa).

SpoVT-AbrB domains follow at residues 8-55 (FINN…GISH) and 84-127 (AVQL…QPQN).

It belongs to the MraZ family. Forms oligomers.

The protein localises to the cytoplasm. The protein resides in the nucleoid. The protein is Transcriptional regulator MraZ of Rickettsia bellii (strain OSU 85-389).